The primary structure comprises 483 residues: Phosphoglucosamine mutase (483 aa).

S131 (phosphoserine intermediate) is an active-site residue. Residues S131, D272, D274, and D276 each contribute to the Mg(2+) site. Position 131 is a phosphoserine (S131).

Belongs to the phosphohexose mutase family. Requires Mg(2+) as cofactor. Activated by phosphorylation.

It carries out the reaction alpha-D-glucosamine 1-phosphate = D-glucosamine 6-phosphate. Functionally, catalyzes the conversion of glucosamine-6-phosphate to glucosamine-1-phosphate. The chain is Phosphoglucosamine mutase from Magnetococcus marinus (strain ATCC BAA-1437 / JCM 17883 / MC-1).